A 192-amino-acid polypeptide reads, in one-letter code: E3 ubiquitin-protein ligase RNF185 (192 aa).

The segment covering Met1 to Ala27 has biased composition (low complexity). The interval Met1–Ser30 is disordered. Residues Met1 to Asp130 are Cytoplasmic-facing. The required for ubiquitin ligase activity and protection against ER stress-induced cell death stretch occupies residues Glu29–Lys80. The RING-type zinc finger occupies Cys39–Lys80. The tract at residues Pro90–Phe123 is disordered. A helical transmembrane segment spans residues Gly131–Phe151. Over Asn152–Glu171 the chain is Mitochondrial intermembrane. Residues Gln172–Ala192 form a helical membrane-spanning segment.

Interacts with ATG5 and BNIP1. Ubiquitously expressed.

It is found in the mitochondrion outer membrane. It localises to the endoplasmic reticulum membrane. The enzyme catalyses S-ubiquitinyl-[E2 ubiquitin-conjugating enzyme]-L-cysteine + [acceptor protein]-L-lysine = [E2 ubiquitin-conjugating enzyme]-L-cysteine + N(6)-ubiquitinyl-[acceptor protein]-L-lysine.. Its pathway is protein modification; protein ubiquitination. In terms of biological role, E3 ubiquitin-protein ligase that regulates selective mitochondrial autophagy by mediating 'Lys-63'-linked polyubiquitination of BNIP1. Acts in the endoplasmic reticulum (ER)-associated degradation (ERAD) pathway, which targets misfolded proteins that accumulate in the endoplasmic reticulum (ER) for ubiquitination and subsequent proteasome-mediated degradation. Protects cells from ER stress-induced apoptosis. Responsible for the cotranslational ubiquitination and degradation of CFTR in the ERAD pathway. Also acts as a regulator of the innate antiviral response by catalyzing 'Lys-27'-linked polyubiquitination of CGAS at 'Lys-173' and 'Lys-384', thereby promoting CGAS cyclic GMP-AMP synthase activity. Preferentially associates with the E2 enzymes UBE2J1 and UBE2J2. This Homo sapiens (Human) protein is E3 ubiquitin-protein ligase RNF185.